The chain runs to 268 residues: Minor capsid protein VP2 (268 aa).

The segment covering 132 to 144 (STPQSLGALTGRT) has biased composition (polar residues). A disordered region spans residues 132 to 199 (STPQSLGALT…SLSSAARTRS (68 aa)). Positions 145–163 (NSRVSAPARSSPSALSNAP) are enriched in low complexity. A compositionally biased stretch (polar residues) spans 164 to 178 (TATSLHSNQTVSTRL). The segment covering 179–195 (GSSAGSGTGVSSLSSAA) has biased composition (low complexity).

It belongs to the norovirus VP2 family. As to quaternary structure, homooligomer. The portal-like structure consists in 12 copies of VP2. Interacts with capsid protein VP1.

It localises to the virion. It is found in the host cytoplasm. Minor structural protein that forms a portal-like structure at a unique three-fold axis of symmetry, following binding to the host receptor. The channel formed by VP2 may allow the delivery of the viral genome through the host endosomal membrane. The sequence is that of Minor capsid protein VP2 from Lordsdale virus (strain GII/Human/United Kingdom/Lordsdale/1993) (Human enteric calicivirus).